A 154-amino-acid chain; its full sequence is Ecotin-like protein 2 (154 aa).

The protein belongs to the protease inhibitor I11 (ecotin) family.

This Trypanosoma brucei brucei (strain 927/4 GUTat10.1) protein is Ecotin-like protein 2.